We begin with the raw amino-acid sequence, 332 residues long: Casein kinase II subunit alpha (332 aa).

Positions 34–319 (YEVVRKVGRG…ALEAMTHPYF (286 aa)) constitute a Protein kinase domain. ATP contacts are provided by residues 40–48 (VGRGKYSEV) and lysine 63. Aspartate 151 acts as the Proton acceptor in catalysis.

This sequence belongs to the protein kinase superfamily. Ser/Thr protein kinase family. CK2 subfamily. As to quaternary structure, tetramer of two alpha and two beta chains (possible).

It catalyses the reaction L-seryl-[protein] + ATP = O-phospho-L-seryl-[protein] + ADP + H(+). The enzyme catalyses L-threonyl-[protein] + ATP = O-phospho-L-threonyl-[protein] + ADP + H(+). Its function is as follows. Casein kinases are operationally defined by their preferential utilization of acidic proteins such as caseins as substrates. The alpha chain contains the catalytic site. The chain is Casein kinase II subunit alpha (ACK2) from Zea mays (Maize).